Consider the following 172-residue polypeptide: Ribosome maturation factor RimM (172 aa).

In terms of domain architecture, PRC barrel spans Glu-92–Gly-167.

It belongs to the RimM family. As to quaternary structure, binds ribosomal protein uS19.

The protein resides in the cytoplasm. Its function is as follows. An accessory protein needed during the final step in the assembly of 30S ribosomal subunit, possibly for assembly of the head region. Essential for efficient processing of 16S rRNA. May be needed both before and after RbfA during the maturation of 16S rRNA. It has affinity for free ribosomal 30S subunits but not for 70S ribosomes. In Ehrlichia ruminantium (strain Gardel), this protein is Ribosome maturation factor RimM.